Here is a 122-residue protein sequence, read N- to C-terminus: Fluoride-specific ion channel FluC (122 aa).

The next 4 membrane-spanning stretches (helical) occupy residues 4–24 (LAVL…SIFI), 33–53 (LGTM…SIYL), 66–86 (LLIT…LEGI), and 95–115 (LKAF…VALG). Residues Gly-73 and Thr-76 each contribute to the Na(+) site.

Belongs to the fluoride channel Fluc/FEX (TC 1.A.43) family.

Its subcellular location is the cell inner membrane. It carries out the reaction fluoride(in) = fluoride(out). Its activity is regulated as follows. Na(+) is not transported, but it plays an essential structural role and its presence is essential for fluoride channel function. Fluoride-specific ion channel. Important for reducing fluoride concentration in the cell, thus reducing its toxicity. The protein is Fluoride-specific ion channel FluC of Hydrogenobaculum sp. (strain Y04AAS1).